Reading from the N-terminus, the 568-residue chain is Matrix metalloproteinase-21 (568 aa).

The N-terminal stretch at 1–24 (MLAASVLRLTLPLCWLVAPQPTQP) is a signal peptide. The propeptide occupies 25 to 143 (ERLFHSRDRS…SLGLRPRARQ (119 aa)). The Cysteine switch signature appears at 110–117 (PRCGVPDT). Zn(2+)-binding residues include Cys112 and His282. Glu283 is a catalytic residue. The Zn(2+) site is built by His286 and His292. Cys328 and Cys559 form a disulfide bridge. Hemopexin repeat units follow at residues 329–388 (KGSF…WRGI), 390–446 (TQSI…FPGI), 447–495 (PSPL…FPAI), and 502–558 (FRNL…WFDV). Asn371 carries an N-linked (GlcNAc...) asparagine glycan.

It belongs to the peptidase M10A family. Zn(2+) serves as cofactor. It depends on Ca(2+) as a cofactor. In terms of processing, the precursor is cleaved by a furin endopeptidase.

Its subcellular location is the secreted. In terms of biological role, plays a specialized role in the generation of left-right asymmetry during embryogenesis. May act as a negative regulator of the NOTCH-signaling pathway. Cleaves alpha-1-antitrypsin. This Mus musculus (Mouse) protein is Matrix metalloproteinase-21 (Mmp21).